A 968-amino-acid chain; its full sequence is RNA polymerase-associated protein RapA (968 aa).

Residues 164 to 334 (DVGRRHAPRV…FARLRLLDPN (171 aa)) enclose the Helicase ATP-binding domain. 177-184 (DEVGLGKT) is a binding site for ATP. Residues 280–283 (DEAH) carry the DEAH box motif. In terms of domain architecture, Helicase C-terminal spans 490–662 (RVEWLMGYLT…YLASPDETEG (173 aa)).

It belongs to the SNF2/RAD54 helicase family. RapA subfamily. In terms of assembly, interacts with the RNAP. Has a higher affinity for the core RNAP than for the holoenzyme. Its ATPase activity is stimulated by binding to RNAP.

Transcription regulator that activates transcription by stimulating RNA polymerase (RNAP) recycling in case of stress conditions such as supercoiled DNA or high salt concentrations. Probably acts by releasing the RNAP, when it is trapped or immobilized on tightly supercoiled DNA. Does not activate transcription on linear DNA. Probably not involved in DNA repair. This chain is RNA polymerase-associated protein RapA, found in Escherichia coli O81 (strain ED1a).